A 402-amino-acid polypeptide reads, in one-letter code: Endoglucanase 1 (402 aa).

Q1 carries the post-translational modification Pyrrolidone carboxylic acid. 3 disulfides stabilise this stretch: C18-C24, C51-C73, and C63-C69. An N-linked (GlcNAc...) asparagine glycan is attached at N89. Disulfide bonds link C140-C365, C172-C195, C176-C194, C215-C234, C223-C228, and C239-C315. The active-site Nucleophile is E197. Catalysis depends on E202, which acts as the Proton donor. Residue N247 is glycosylated (N-linked (GlcNAc...) asparagine).

It belongs to the glycosyl hydrolase 7 (cellulase C) family. As to quaternary structure, monomer.

It localises to the secreted. It catalyses the reaction Endohydrolysis of (1-&gt;4)-beta-D-glucosidic linkages in cellulose, lichenin and cereal beta-D-glucans.. Functionally, the biological conversion of cellulose to glucose generally requires three types of hydrolytic enzymes: (1) Endoglucanases which cut internal beta-1,4-glucosidic bonds; (2) Exocellobiohydrolases that cut the disaccharide cellobiose from the non-reducing end of the cellulose polymer chain; (3) Beta-1,4-glucosidases which hydrolyze the cellobiose and other short cello-oligosaccharides to glucose. The sequence is that of Endoglucanase 1 (CEL7B) from Humicola insolens (Soft-rot fungus).